A 107-amino-acid polypeptide reads, in one-letter code: Nucleoid-associated protein A1C_06705 (107 aa).

The protein belongs to the YbaB/EbfC family. As to quaternary structure, homodimer.

Its subcellular location is the cytoplasm. It localises to the nucleoid. In terms of biological role, binds to DNA and alters its conformation. May be involved in regulation of gene expression, nucleoid organization and DNA protection. This chain is Nucleoid-associated protein A1C_06705, found in Rickettsia akari (strain Hartford).